A 1050-amino-acid polypeptide reads, in one-letter code: Self-sufficient cytochrome P450 monooxygenase CYP505E5 (1050 aa).

Cysteine 405 serves as a coordination point for heme. The disordered stretch occupies residues 461–495 (TATGLSRRSMLVARDGSSEESSNHPAEARGDHAPA). The region spanning 500 to 641 (VSFFYGSNSG…DLEAWEETSL (142 aa)) is the Flavodoxin-like domain. Residues 506-510 (SNSGT) and 585-617 (VFGCGHHDWTQTFYRIPILIDDLMYKAGATRLA) contribute to the FMN site. The FAD-binding FR-type domain occupies 679-907 (KGLIEAKVTA…RPAKETFHLP (229 aa)).

This sequence in the N-terminal section; belongs to the cytochrome P450 family. It depends on FAD as a cofactor. FMN is required as a cofactor. Requires heme as cofactor.

It carries out the reaction 2 oxidized [cytochrome P450] + NADPH = 2 reduced [cytochrome P450] + NADP(+) + H(+). The catalysed reaction is an organic molecule + reduced [NADPH--hemoprotein reductase] + O2 = an alcohol + oxidized [NADPH--hemoprotein reductase] + H2O + H(+). It catalyses the reaction dodecanoate + reduced [NADPH--hemoprotein reductase] + O2 = 5-hydroxydodecanoate + oxidized [NADPH--hemoprotein reductase] + H2O + H(+). The enzyme catalyses tetradecanoate + reduced [NADPH--hemoprotein reductase] + O2 = 7-hydroxytetradecanoate + oxidized [NADPH--hemoprotein reductase] + H2O + H(+). It carries out the reaction dodecan-1-ol + reduced [NADPH--hemoprotein reductase] + O2 = 1,5-dodecanediol + oxidized [NADPH--hemoprotein reductase] + H2O + H(+). The catalysed reaction is dodecan-1-ol + reduced [NADPH--hemoprotein reductase] + O2 = 1,4-dodecanediol + oxidized [NADPH--hemoprotein reductase] + H2O + H(+). It catalyses the reaction dodecan-1-ol + reduced [NADPH--hemoprotein reductase] + O2 = 1,6-dodecanediol + oxidized [NADPH--hemoprotein reductase] + H2O + H(+). Functionally, self-sufficient cytochrome P450 monooxygenase that catalyzes the regioselective in-chain hydroxylation of alkanes, fatty alcohols, and fatty acids at the omega-7 position. Performs hydroxylation of C10-C16 n-alkanes and C12 and C14 fatty alcohols; and thereby enables the one step biocatalytic synthesis of rare alcohols such as 5-dodecanol and 7-tetradecanol. Converts 1-dodecanol into 1,5-dodecanediol as major product with very little sub-terminally hydroxylated products with the 1,4-dodecanediol and 1,6-dodecanediol more abundant. Converts dodecanoic acid to 5-hydroxydodecanoic acid which can be further converted into delta-dodecalactone by lactonization of the 5-hydroxy acid at low pH. Also gives sub-terminal hydroxylation of dodecanoic acid with 9-hydroxydodecanoic acid being the second most abundant product. In Aspergillus kawachii (strain NBRC 4308) (White koji mold), this protein is Self-sufficient cytochrome P450 monooxygenase CYP505E5.